The following is a 382-amino-acid chain: Solvent efflux pump periplasmic linker SrpA (382 aa).

The N-terminal stretch at 1–23 (MRQIRSPRALRVIPLTALMLISG) is a signal peptide. A lipid anchor (N-palmitoyl cysteine) is attached at Cys24. Cys24 is lipidated: S-diacylglycerol cysteine. A coiled-coil region spans residues 98–127 (RTYEAQLRRAEANRTSAQNLARRYETLLKT).

It belongs to the membrane fusion protein (MFP) (TC 8.A.1) family.

Its subcellular location is the cell inner membrane. Its function is as follows. The periplasmic linker protein component of an organic solvent efflux pump. Involved in export of a number of low log POW compounds including hexane (log POW 3.5), toluene (log POW 2.5) and dimethylphthalate (log POW 2.3). The solvent resistance phenotype has been postulated to depend on the operon expression level. The polypeptide is Solvent efflux pump periplasmic linker SrpA (srpA) (Pseudomonas putida (Arthrobacter siderocapsulatus)).